The chain runs to 904 residues: Protein translocase subunit SecA (904 aa).

ATP contacts are provided by residues Gln89, 107–111 (GEGKT), and Asp502. The disordered stretch occupies residues 872–892 (VESDPTTWGEPSRNDPCPCGS). Residues Cys888, Cys890, Cys899, and His900 each contribute to the Zn(2+) site.

It belongs to the SecA family. Part of the essential protein translocation apparatus which comprises SecA, SecYEG and auxiliary proteins SecDF-YajC and YidC. Homodimer. It depends on Zn(2+) as a cofactor.

The protein resides in the cell inner membrane. It is found in the cytoplasm. It carries out the reaction ATP + H2O + cellular proteinSide 1 = ADP + phosphate + cellular proteinSide 2.. Part of the Sec protein translocase complex. Interacts with the SecYEG preprotein conducting channel. Has a central role in coupling the hydrolysis of ATP to the transfer of proteins into and across the cell membrane, serving both as a receptor for the preprotein-SecB complex and as an ATP-driven molecular motor driving the stepwise translocation of polypeptide chains across the membrane. The sequence is that of Protein translocase subunit SecA from Rhodobacter capsulatus (Rhodopseudomonas capsulata).